Here is a 198-residue protein sequence, read N- to C-terminus: Recombination protein RecR (198 aa).

The segment at 57–72 (CSVCGHITDKDPCYIC) adopts a C4-type zinc-finger fold. Positions 80–175 (SVICVVQESK…KVTRIAHGLP (96 aa)) constitute a Toprim domain.

This sequence belongs to the RecR family.

May play a role in DNA repair. It seems to be involved in an RecBC-independent recombinational process of DNA repair. It may act with RecF and RecO. The chain is Recombination protein RecR from Listeria welshimeri serovar 6b (strain ATCC 35897 / DSM 20650 / CCUG 15529 / CIP 8149 / NCTC 11857 / SLCC 5334 / V8).